Reading from the N-terminus, the 415-residue chain is SVF1-like protein YDR222W (415 aa).

This sequence belongs to the SVF1 family.

The protein localises to the cytoplasm. This chain is SVF1-like protein YDR222W, found in Saccharomyces cerevisiae (strain ATCC 204508 / S288c) (Baker's yeast).